The primary structure comprises 268 residues: Enoyl-[acyl-carrier-protein] reductase [NADH] 2 (268 aa).

NAD(+)-binding positions include G14, 20 to 21, Q41, 65 to 66, and I93; these read SI and DV. Catalysis depends on proton acceptor residues Y146 and Y156. NAD(+)-binding positions include K163 and 192-196; that span reads IRTLA.

Belongs to the short-chain dehydrogenases/reductases (SDR) family. FabI subfamily.

The protein resides in the cell inner membrane. The catalysed reaction is a 2,3-saturated acyl-[ACP] + NAD(+) = a (2E)-enoyl-[ACP] + NADH + H(+). Its pathway is lipid metabolism; fatty acid biosynthesis. The protein is Enoyl-[acyl-carrier-protein] reductase [NADH] 2 (fabI2) of Rhizobium meliloti (strain 1021) (Ensifer meliloti).